Here is a 120-residue protein sequence, read N- to C-terminus: Ribosome-binding factor A (120 aa).

The protein belongs to the RbfA family. In terms of assembly, monomer. Binds 30S ribosomal subunits, but not 50S ribosomal subunits or 70S ribosomes.

It is found in the cytoplasm. Functionally, one of several proteins that assist in the late maturation steps of the functional core of the 30S ribosomal subunit. Associates with free 30S ribosomal subunits (but not with 30S subunits that are part of 70S ribosomes or polysomes). Required for efficient processing of 16S rRNA. May interact with the 5'-terminal helix region of 16S rRNA. This is Ribosome-binding factor A from Verminephrobacter eiseniae (strain EF01-2).